The sequence spans 513 residues: Putative ADP-ribosyl glycohydrolase L444 (513 aa).

Over residues 1–23 the composition is skewed to basic and acidic residues; it reads MSDKIQSRESKTTKPTKTEKISD. The segment at 1 to 33 is disordered; it reads MSDKIQSRESKTTKPTKTEKISDKSGNLSQVKS. Polar residues predominate over residues 24–33; the sequence is KSGNLSQVKS.

It belongs to the ADP-ribosylglycohydrolase family.

The polypeptide is Putative ADP-ribosyl glycohydrolase L444 (Acanthamoeba polyphaga mimivirus (APMV)).